The sequence spans 747 residues: H(+)/Cl(-) exchange transporter 4 (747 aa).

The tract at residues 1-50 (MDFLEEPFPDVGTYEDFHTIDWLREKSRDTDRHRKITSKSKESIWEFIKS) is required for localization in the endoplasmic reticulum. Topologically, residues 1 to 54 (MDFLEEPFPDVGTYEDFHTIDWLREKSRDTDRHRKITSKSKESIWEFIKSLLDA) are cytoplasmic. Helical transmembrane passes span 55-92 (WSGW…VCLS) and 138-161 (LNYL…VRVF). A Selectivity filter part_1 motif is present at residues 167 to 171 (GSGIP). A chloride-binding site is contributed by S168. The segment at residues 170–177 (IPEIKTIL) is an intramembrane region (helical). Transmembrane regions (helical) follow at residues 187-205 (GKWT…VSSG) and 211-230 (EGPL…SLFS). A Selectivity filter part_2 motif is present at residues 209-213 (GKEGP). 2 intramembrane regions (helical) span residues 242-254 (VLSA…VSVA) and 258-266 (PIGGVLFSL). 5 helical membrane-spanning segments follow: residues 278 to 296 (LWRS…RSIN), 320 to 345 (FPFI…AWCR), 352 to 372 (LGRY…IVAY), 429 to 449 (MWQL…TFGM), and 454 to 473 (GLFI…VGIG). A Selectivity filter part_3 motif is present at residues 454–458 (GLFIP). F456 lines the chloride pocket. 2 consecutive intramembrane regions (helical) follow at residues 501–515 (GLYA…LGGV) and 519–530 (TVSLVVIMFELT). Residues 531–534 (GGLE) constitute an intramembrane region (note=Loop between two helices). The helical transmembrane segment at 535–553 (YIVPLMAAAVTSKWVADAF) threads the bilayer. At 554–747 (GKEGIYEAHI…NQDPESIMFN (194 aa)) the chain is on the cytoplasmic side. Y559 lines the chloride pocket. 2 CBS domains span residues 587 to 653 (MRPR…QRQE) and 680 to 742 (LRRI…QDPE). Residues S597 and 618-620 (YNG) each bind ATP. The required for localization in the endoplasmic reticulum stretch occupies residues 654–683 (GIVSNSIMYFTEEPPELPANSPHPLKLRRI). Position 725–728 (725–728 (TKKD)) interacts with ATP.

Belongs to the chloride channel (TC 2.A.49) family. ClC-4/CLCN4 subfamily. As to expression, predominantly present in excitable tissues such as nervous system and skeletal muscle. Not detected in heart.

The protein resides in the early endosome membrane. It is found in the late endosome membrane. It localises to the endoplasmic reticulum membrane. Its subcellular location is the lysosome membrane. The protein localises to the recycling endosome membrane. Functionally, strongly outwardly rectifying, electrogenic H(+)/Cl(-)exchanger which mediates the exchange of chloride ions against protons. The CLC channel family contains both chloride channels and proton-coupled anion transporters that exchange chloride or another anion for protons. The presence of conserved gating glutamate residues is typical for family members that function as antiporters. This chain is H(+)/Cl(-) exchange transporter 4 (Clcn4), found in Mus musculus (Mouse).